A 431-amino-acid polypeptide reads, in one-letter code: Trigger factor (431 aa).

Residues 161-246 (DDRVTIDFVG…LKKVENIVLP (86 aa)) enclose the PPIase FKBP-type domain.

The protein belongs to the FKBP-type PPIase family. Tig subfamily.

The protein resides in the cytoplasm. It carries out the reaction [protein]-peptidylproline (omega=180) = [protein]-peptidylproline (omega=0). Its function is as follows. Involved in protein export. Acts as a chaperone by maintaining the newly synthesized protein in an open conformation. Functions as a peptidyl-prolyl cis-trans isomerase. The polypeptide is Trigger factor (Glaesserella parasuis serovar 5 (strain SH0165) (Haemophilus parasuis)).